We begin with the raw amino-acid sequence, 310 residues long: Nucleotide-binding protein Ddes_0972 (310 aa).

30 to 37 (GLSGAGKS) serves as a coordination point for ATP. 82–85 (DLRQ) provides a ligand contact to GTP.

The protein belongs to the RapZ-like family.

In terms of biological role, displays ATPase and GTPase activities. The protein is Nucleotide-binding protein Ddes_0972 of Desulfovibrio desulfuricans (strain ATCC 27774 / DSM 6949 / MB).